The sequence spans 406 residues: GTPase Obg (406 aa).

The region spanning 1 to 159 (MKFVDEVSIF…RDLKLELKVL (159 aa)) is the Obg domain. The disordered stretch occupies residues 126-149 (GNTRFKSSTNRAPRQTTPGKPGES). Residues 129 to 143 (RFKSSTNRAPRQTTP) are compositionally biased toward polar residues. In terms of domain architecture, OBG-type G spans 160–333 (ADVGLLGLPN…ICRDIMHYLE (174 aa)). Residues 166–173 (GLPNAGKS), 191–195 (FTTLV), 213–216 (DIPG), 283–286 (NKMD), and 314–316 (SAI) each bind GTP. Ser173 and Thr193 together coordinate Mg(2+). A disordered region spans residues 376-406 (SGVRSVDDIDEDDDFFDDEDDDGPEIIYVRD). Acidic residues predominate over residues 383-399 (DIDEDDDFFDDEDDDGP).

Belongs to the TRAFAC class OBG-HflX-like GTPase superfamily. OBG GTPase family. In terms of assembly, monomer. Mg(2+) serves as cofactor.

The protein localises to the cytoplasm. Its function is as follows. An essential GTPase which binds GTP, GDP and possibly (p)ppGpp with moderate affinity, with high nucleotide exchange rates and a fairly low GTP hydrolysis rate. Plays a role in control of the cell cycle, stress response, ribosome biogenesis and in those bacteria that undergo differentiation, in morphogenesis control. This is GTPase Obg from Ectopseudomonas mendocina (strain ymp) (Pseudomonas mendocina).